Here is a 329-residue protein sequence, read N- to C-terminus: tRNA (guanine(10)-N2)-dimethyltransferase (329 aa).

The THUMP domain occupies 40–143 (NVENVEIFER…KLWIGIRIRE (104 aa)).

It belongs to the methyltransferase superfamily. Trm-G10 family. Monomer.

The protein localises to the cytoplasm. It catalyses the reaction guanosine(10) in tRNA + 2 S-adenosyl-L-methionine = N(2)-dimethylguanosine(10) in tRNA + 2 S-adenosyl-L-homocysteine + 2 H(+). In terms of biological role, catalyzes the adenosylmethionine-dependent methylation of the exocyclic amino group (N(2)) of guanosine at position 10 of various tRNAs. Acts via a two-step process that leads to the formation of either N(2)-monomethyl (m(2)G) or N(2)-dimethylguanosine (m(2)(2)G). The sequence is that of tRNA (guanine(10)-N2)-dimethyltransferase (trmG10) from Pyrococcus abyssi (strain GE5 / Orsay).